Consider the following 236-residue polypeptide: Small ribosomal subunit protein uS2c (236 aa).

It belongs to the universal ribosomal protein uS2 family.

The protein resides in the plastid. It localises to the chloroplast. The sequence is that of Small ribosomal subunit protein uS2c (rps2) from Zea mays (Maize).